Here is a 231-residue protein sequence, read N- to C-terminus: tRNA (guanine-N(7)-)-methyltransferase (231 aa).

S-adenosyl-L-methionine contacts are provided by Glu-62, Glu-87, Asp-114, and Asp-136. Asp-136 is an active-site residue. Substrate-binding positions include Lys-140, Asp-172, and 210–213 (TRYE).

It belongs to the class I-like SAM-binding methyltransferase superfamily. TrmB family.

It carries out the reaction guanosine(46) in tRNA + S-adenosyl-L-methionine = N(7)-methylguanosine(46) in tRNA + S-adenosyl-L-homocysteine. It participates in tRNA modification; N(7)-methylguanine-tRNA biosynthesis. In terms of biological role, catalyzes the formation of N(7)-methylguanine at position 46 (m7G46) in tRNA. The protein is tRNA (guanine-N(7)-)-methyltransferase of Zymomonas mobilis subsp. mobilis (strain ATCC 31821 / ZM4 / CP4).